Here is a 278-residue protein sequence, read N- to C-terminus: Probable endonuclease 4 (278 aa).

His69, His109, Glu145, Asp179, His182, His216, Asp229, His231, and Glu261 together coordinate Zn(2+).

It belongs to the AP endonuclease 2 family. The cofactor is Zn(2+).

It carries out the reaction Endonucleolytic cleavage to 5'-phosphooligonucleotide end-products.. Functionally, endonuclease IV plays a role in DNA repair. It cleaves phosphodiester bonds at apurinic or apyrimidinic (AP) sites, generating a 3'-hydroxyl group and a 5'-terminal sugar phosphate. In Buchnera aphidicola subsp. Baizongia pistaciae (strain Bp), this protein is Probable endonuclease 4.